We begin with the raw amino-acid sequence, 198 residues long: Glycerol-3-phosphate acyltransferase (198 aa).

6 helical membrane passes run 1–21 (MNLL…GYLA), 55–75 (VFLL…YLLL), 79–99 (WQVA…WLNW), 111–131 (IFLG…IIMI), 136–156 (IVSL…FLSF), and 158–178 (GSNL…LVIW).

It belongs to the PlsY family. In terms of assembly, probably interacts with PlsX.

Its subcellular location is the cell inner membrane. It carries out the reaction an acyl phosphate + sn-glycerol 3-phosphate = a 1-acyl-sn-glycero-3-phosphate + phosphate. It participates in lipid metabolism; phospholipid metabolism. Catalyzes the transfer of an acyl group from acyl-phosphate (acyl-PO(4)) to glycerol-3-phosphate (G3P) to form lysophosphatidic acid (LPA). This enzyme utilizes acyl-phosphate as fatty acyl donor, but not acyl-CoA or acyl-ACP. The protein is Glycerol-3-phosphate acyltransferase of Prochlorococcus marinus (strain NATL2A).